The sequence spans 248 residues: UPF0651 protein YPL107W, mitochondrial (248 aa).

The N-terminal 26 residues, 1-26 (MIRNQGWSLLYRIYPVRRFTRYSRVD), are a transit peptide targeting the mitochondrion. The Oxidoreductase-like domain occupies 69 to 116 (KKIAGVQVPAKPQEPDNCCMSGCVNCVWEIYSEDLRDWKHRRKEAAEK).

It belongs to the UPF0651 family.

The protein localises to the mitochondrion. The sequence is that of UPF0651 protein YPL107W, mitochondrial from Saccharomyces cerevisiae (strain ATCC 204508 / S288c) (Baker's yeast).